Consider the following 367-residue polypeptide: Phospho-N-acetylmuramoyl-pentapeptide-transferase (367 aa).

The next 10 helical transmembrane spans lie at 16 to 36 (LLLA…WVRF), 62 to 82 (TMGG…FNLV), 87 to 107 (MLLP…DDWL), 125 to 145 (FWIM…PQPY), 158 to 178 (VGEV…IVFI), 190 to 210 (SLAG…TFLA), 214 to 234 (LTNL…FLWY), 240 to 260 (QVFM…VVAL), 264 to 284 (QWLL…STMI), and 326 to 346 (FVLI…IFGP).

Belongs to the glycosyltransferase 4 family. MraY subfamily. It depends on Mg(2+) as a cofactor.

It is found in the cell membrane. The catalysed reaction is UDP-N-acetyl-alpha-D-muramoyl-L-alanyl-gamma-D-glutamyl-meso-2,6-diaminopimeloyl-D-alanyl-D-alanine + di-trans,octa-cis-undecaprenyl phosphate = di-trans,octa-cis-undecaprenyl diphospho-N-acetyl-alpha-D-muramoyl-L-alanyl-D-glutamyl-meso-2,6-diaminopimeloyl-D-alanyl-D-alanine + UMP. It functions in the pathway cell wall biogenesis; peptidoglycan biosynthesis. Catalyzes the initial step of the lipid cycle reactions in the biosynthesis of the cell wall peptidoglycan: transfers peptidoglycan precursor phospho-MurNAc-pentapeptide from UDP-MurNAc-pentapeptide onto the lipid carrier undecaprenyl phosphate, yielding undecaprenyl-pyrophosphoryl-MurNAc-pentapeptide, known as lipid I. This is Phospho-N-acetylmuramoyl-pentapeptide-transferase from Chloroflexus aurantiacus (strain ATCC 29366 / DSM 635 / J-10-fl).